The following is a 30-amino-acid chain: Cytochrome b6/f complex 12.6 kDa peptide (30 aa).

The segment at 1–30 is disordered; that stretch reads SGSGVRSAKKGGKAQGGQAGVGYKGSTEPG. Gly residues predominate over residues 13–23; sequence KAQGGQAGVGY.

It localises to the plastid. Its subcellular location is the chloroplast. In terms of biological role, may be a component of the cytochrome b6/f complex which is part of the photosynthetic respiratory chain. This is Cytochrome b6/f complex 12.6 kDa peptide from Euglena gracilis.